A 592-amino-acid chain; its full sequence is Alpha-1,3-galactosidase B (592 aa).

A signal peptide spans 1-14 (MKLLSVLSLSLVLS). The N-palmitoyl cysteine moiety is linked to residue Cys15. Cys15 carries S-diacylglycerol cysteine lipidation. 3 PbH1 repeats span residues 429-451 (TPEV…LFST), 452-474 (PRKT…LLCG), and 485-538 (CRHV…VIED).

The protein belongs to the glycosyl hydrolase 110 family. B subfamily.

The protein localises to the cell membrane. It catalyses the reaction Hydrolysis of terminal, non-reducing branched (1-&gt;3)-alpha-D-galactosidic residues, producing free D-galactose.. The enzyme catalyses Hydrolysis of terminal, non-reducing linear (1-&gt;3)-alpha-D-galactosidic residues, producing free D-galactose.. It carries out the reaction Hydrolysis of terminal, non-reducing alpha-D-galactose residues in alpha-D-galactosides, including galactose oligosaccharides, galactomannans and galactolipids.. In terms of biological role, alpha-galactosidase. Removes both branched alpha-1,3-linked galactose residues of blood group B antigens and linear alpha-1,3-linked galactose structures. In Phocaeicola vulgatus (strain ATCC 8482 / DSM 1447 / JCM 5826 / CCUG 4940 / NBRC 14291 / NCTC 11154) (Bacteroides vulgatus), this protein is Alpha-1,3-galactosidase B (glaB1).